Here is a 93-residue protein sequence, read N- to C-terminus: UPF0058 protein AF_0738 (93 aa).

It belongs to the UPF0058 family.

The chain is UPF0058 protein AF_0738 from Archaeoglobus fulgidus (strain ATCC 49558 / DSM 4304 / JCM 9628 / NBRC 100126 / VC-16).